The primary structure comprises 516 residues: Probable 2-isopropylmalate synthase (516 aa).

The region spanning 20–271 (VTVFDTTLRD…KTNIRTEYLV (252 aa)) is the Pyruvate carboxyltransferase domain.

The protein belongs to the alpha-IPM synthase/homocitrate synthase family.

The catalysed reaction is 3-methyl-2-oxobutanoate + acetyl-CoA + H2O = (2S)-2-isopropylmalate + CoA + H(+). It functions in the pathway amino-acid biosynthesis; L-leucine biosynthesis; L-leucine from 3-methyl-2-oxobutanoate: step 1/4. In terms of biological role, catalyzes the condensation of the acetyl group of acetyl-CoA with 3-methyl-2-oxobutanoate (2-oxoisovalerate) to form 3-carboxy-3-hydroxy-4-methylpentanoate (2-isopropylmalate). This chain is Probable 2-isopropylmalate synthase (leuA), found in Methanosarcina mazei (strain ATCC BAA-159 / DSM 3647 / Goe1 / Go1 / JCM 11833 / OCM 88) (Methanosarcina frisia).